Consider the following 267-residue polypeptide: Undecaprenyl-diphosphatase (267 aa).

Helical transmembrane passes span 1 to 21, 49 to 69, 83 to 103, 111 to 131, 190 to 210, 219 to 239, and 245 to 265; these read MTLF…FLPV, VGTL…AVAG, AFLA…GLAL, ALRS…VLYW, MLMS…EVAA, DAAI…TLMM, and VSFT…LIIA.

This sequence belongs to the UppP family.

It localises to the cell inner membrane. It carries out the reaction di-trans,octa-cis-undecaprenyl diphosphate + H2O = di-trans,octa-cis-undecaprenyl phosphate + phosphate + H(+). Functionally, catalyzes the dephosphorylation of undecaprenyl diphosphate (UPP). Confers resistance to bacitracin. The protein is Undecaprenyl-diphosphatase of Dinoroseobacter shibae (strain DSM 16493 / NCIMB 14021 / DFL 12).